The sequence spans 30 residues: Trypsin inhibitor 6 (30 aa).

3 disulfides stabilise this stretch: Cys-4–Cys-21, Cys-11–Cys-23, and Cys-17–Cys-29.

Belongs to the protease inhibitor I7 (squash-type serine protease inhibitor) family.

It is found in the secreted. In terms of biological role, strongly inhibits trypsin, weakly inhibits chymotrypsin. In Cyclanthera pedata (Achocha), this protein is Trypsin inhibitor 6.